We begin with the raw amino-acid sequence, 198 residues long: Recombination protein RecR (198 aa).

The segment at 57–72 adopts a C4-type zinc-finger fold; the sequence is CSICGNLTESDPCAIC. The Toprim domain occupies 80–175; the sequence is TTILVVEESK…KVTRLAHGLA (96 aa).

The protein belongs to the RecR family.

Functionally, may play a role in DNA repair. It seems to be involved in an RecBC-independent recombinational process of DNA repair. It may act with RecF and RecO. The polypeptide is Recombination protein RecR (Lactococcus lactis subsp. cremoris (strain SK11)).